The sequence spans 119 residues: Large ribosomal subunit protein bL20 (119 aa).

The protein belongs to the bacterial ribosomal protein bL20 family.

Its function is as follows. Binds directly to 23S ribosomal RNA and is necessary for the in vitro assembly process of the 50S ribosomal subunit. It is not involved in the protein synthesizing functions of that subunit. The chain is Large ribosomal subunit protein bL20 from Enterococcus faecalis (strain ATCC 700802 / V583).